A 122-amino-acid polypeptide reads, in one-letter code: MDGLNTGEEEDSAFTSISLTDDTDHSLKSLHSGAERLFPKMMNADMDAVDAENQVELEEKTRLINQVLELQHTLEDLSARVDAVKEENLKLKSENQVLGQYIENLMSASSVFQTTDTKSKRK.

A disordered region spans residues 1 to 26; the sequence is MDGLNTGEEEDSAFTSISLTDDTDHS. Residues 43-101 are a coiled coil; sequence NADMDAVDAENQVELEEKTRLINQVLELQHTLEDLSARVDAVKEENLKLKSENQVLGQY.

It belongs to the SCOC family. As to quaternary structure, homodimer. Interacts with ARL1, ARL2 and ARL3. Directly interacts with FEZ1 and UVRAG. The interaction with UVRAG is reduced by amino acid starvation, but the complex is stabilized in the presence of FEZ1. Interacts with NRBF2.

It localises to the golgi apparatus membrane. It is found in the golgi apparatus. The protein localises to the trans-Golgi network. The protein resides in the cytoplasm. Its subcellular location is the cytosol. Functionally, positive regulator of amino acid starvation-induced autophagy. This Rattus norvegicus (Rat) protein is Short coiled-coil protein (Scoc).